We begin with the raw amino-acid sequence, 648 residues long: Protein KASH5 (648 aa).

The Cytoplasmic portion of the chain corresponds to 1 to 606; it reads MHSILRSSLS…HSPGIRISQH (606 aa). The interval 206–228 is disordered; the sequence is PEAEESANLESFGGEDPRPEGPA. A coiled-coil region spans residues 230-420; the sequence is AELLSNLEDL…EEQLSQSQEG (191 aa). Residues 473-497 are compositionally biased toward acidic residues; sequence EVEPEPEPEPEPEPEPEPQEVEFPS. A disordered region spans residues 473–545; that stretch reads EVEPEPEPEP…EESWVLADPS (73 aa). The helical; Anchor for type IV membrane protein transmembrane segment at 607–627 threads the bilayer; it reads PLVPTPVLGLLLLLLLSILLF. Over 628–648 the chain is Perinuclear space; that stretch reads SQSPPPTWPHLQLYYLQPPPV.

As to quaternary structure, core component the LINC complex which is composed of inner nuclear membrane SUN domain-containing proteins coupled to outer nuclear membrane KASH domain-containing nesprins. SUN and KASH domain-containing proteins seem to bind each other promiscuously; however, differentially expression of LINC complex constituents is giving rise to specific assemblies. At least SUN1/2-containing core LINC complexes are proposed to be hexameric composed of three protomers of each KASH and SUN domain-containing protein. Interacts with SUN1; this interaction mediates its telomere localization by forming a SUN1:KASH5 LINC complex. Component of a probable SUN2:KASH5 LINC complex. Self-associates. Interacts with DYNC1H1, DCTN1, DYNC1I1/2 and PAFAH1B1; suggesting the association with the dynein-dynactin motor complex. Restricted to the testis and the early ootidogenesis ovary. Expressed in spermatocytes and oocytes (at protein level).

It is found in the nucleus outer membrane. It localises to the nucleus. Its subcellular location is the chromosome. The protein localises to the telomere. The protein resides in the nucleus envelope. In terms of biological role, as a component of the LINC (LInker of Nucleoskeleton and Cytoskeleton) complex, involved in the connection between the nuclear lamina and the cytoskeleton. The nucleocytoplasmic interactions established by the LINC complex play an important role in the transmission of mechanical forces across the nuclear envelope and in nuclear movement and positioning. Required for telomere attachment to nuclear envelope in the prophase of meiosis and for rapid telomere prophase movements implicating a SUN1/2:KASH5 LINC complex in which SUN1 and SUN2 seem to act at least partial redundantly. Required for homolog pairing during meiotic prophase in spermatocytes and probably oocytes. Essential for male and female gametogenesis. Recruits cytoplasmic dynein to telomere attachment sites at the nuclear envelope in spermatocytes. In oocytes is involved in meiotic resumption and spindle formation. The sequence is that of Protein KASH5 from Mus musculus (Mouse).